The chain runs to 181 residues: Protein Syd (181 aa).

It belongs to the Syd family.

It localises to the cell inner membrane. Its function is as follows. Interacts with the SecY protein in vivo. May bind preferentially to an uncomplexed state of SecY, thus functioning either as a chelating agent for excess SecY in the cell or as a regulatory factor that negatively controls the translocase function. This Enterobacter sp. (strain 638) protein is Protein Syd.